The primary structure comprises 397 residues: MGSYLGIYTILVLCLLGYSANAEVFTAGGPPNSDITAAVLKAFTSACQAPAPSQVLIPKGDFKLGETVMTGPCKSPIEFTLQGNVKTDGGSTQGKDRWVVFEKINGFKLNGGGTFDGEGNAAWKANNCHKTFECKKLPISVRFDFVDNAEIKDVTSLDAKNFHFNVISGKNMTFDNIKIIAPAESPNTDGIHLGRCEGVKILNTKIATGDDCISVGDGMKNLLIEKVVCGPGHGISVGSLGRYGWEQDVTDITVKNCTLEGTSNGLRIKTWPSAACTTTAAGIHFEDIILNKVSNPILIDQEYCPWNQCNKNKPSTIKLVDITFRNIRGTSENKDAVKLLCSKGHPCENVEIGDINIEYTGPDGPPTFECTNVTPKLVGAQNPKACVGPVVKAPGKE.

The signal sequence occupies residues 1–22 (MGSYLGIYTILVLCLLGYSANA). PbH1 repeat units follow at residues 169 to 195 (GKNM…HLGR), 196 to 217 (CEGV…SVGD), 219 to 239 (MKNL…SVGS), and 249 to 270 (VTDI…RIKT). Residue N171 is glycosylated (N-linked (GlcNAc...) asparagine). Residue D210 is the Proton donor of the active site. Residues C212 and C229 are joined by a disulfide bond. Residue H233 is part of the active site. Residue N256 is glycosylated (N-linked (GlcNAc...) asparagine). Intrachain disulfides connect C341–C347 and C370–C386.

It belongs to the glycosyl hydrolase 28 family. Pollen.

The protein resides in the secreted. It is found in the cell wall. It catalyses the reaction (1,4-alpha-D-galacturonosyl)n+m + H2O = (1,4-alpha-D-galacturonosyl)n + (1,4-alpha-D-galacturonosyl)m.. May function in depolymerizing pectin during pollen development, germination, and tube growth. In Brassica napus (Rape), this protein is Polygalacturonase.